Consider the following 217-residue polypeptide: ATP synthase subunit a (217 aa).

The next 6 membrane-spanning stretches (helical) occupy residues 5-25 (EHVITSIVAMVVALGVVLAAG), 63-83 (LIASIGLFVFFGNVMELLPFV), 89-109 (NINTTLALTLIVFFLYHFEGF), 120-140 (FMGPIKALAPFFFIIEIMSHL), 157-177 (GAILLISIIGVLIGNPFTLAV), and 191-213 (LAIVLQAFIFMILSTIYIAGAVV).

It belongs to the ATPase A chain family. F-type ATPases have 2 components, CF(1) - the catalytic core - and CF(0) - the membrane proton channel. CF(1) has five subunits: alpha(3), beta(3), gamma(1), delta(1), epsilon(1). CF(0) has three main subunits: a(1), b(2) and c(9-12). The alpha and beta chains form an alternating ring which encloses part of the gamma chain. CF(1) is attached to CF(0) by a central stalk formed by the gamma and epsilon chains, while a peripheral stalk is formed by the delta and b chains.

Its subcellular location is the cell inner membrane. Its function is as follows. Key component of the proton channel; it plays a direct role in the translocation of protons across the membrane. The chain is ATP synthase subunit a from Hydrogenobaculum sp. (strain Y04AAS1).